Reading from the N-terminus, the 172-residue chain is Bifunctional protein PyrR (172 aa).

Substrate is bound by residues Thr36–Gly37, Arg77, Asp94–Thr102, and Val151. Residues Leu90–Thr102 carry the PRPP-binding motif.

It belongs to the purine/pyrimidine phosphoribosyltransferase family. PyrR subfamily.

The catalysed reaction is UMP + diphosphate = 5-phospho-alpha-D-ribose 1-diphosphate + uracil. In terms of biological role, regulates the transcription of the pyrimidine nucleotide (pyr) operon in response to exogenous pyrimidines. Functionally, also displays a weak uracil phosphoribosyltransferase activity which is not physiologically significant. This chain is Bifunctional protein PyrR, found in Pseudomonas putida (Arthrobacter siderocapsulatus).